Consider the following 1227-residue polypeptide: Methionine synthase (1227 aa).

The Hcy-binding domain occupies 2-325; it reads SSKVEQLRAQ…EHIAAMSRAV (324 aa). Zn(2+) is bound by residues cysteine 247, cysteine 310, and cysteine 311. The 262-residue stretch at 356 to 617 folds into the Pterin-binding domain; sequence FVNVGERTNV…LPAELRDAVE (262 aa). Residues 650 to 744 form the B12-binding N-terminal domain; sequence QQAEWRSWDV…FIEASKEKGS (95 aa). Methylcob(III)alamin-binding positions include glutamate 694, 756–760, histidine 759, serine 804, threonine 808, and alanine 860; that span reads GDVHD. Positions 746 to 881 constitute a B12-binding domain; that stretch reads NGKMVIATVK…SDTQRDDFVA (136 aa). One can recognise an AdoMet activation domain in the interval 897–1227; it reads KKPRTPPVTL…LAPNLGYDAD (331 aa). S-adenosyl-L-methionine contacts are provided by residues aspartate 946, arginine 1134, and 1189 to 1190; that span reads YF.

This sequence belongs to the vitamin-B12 dependent methionine synthase family. Requires methylcob(III)alamin as cofactor. Zn(2+) serves as cofactor.

The catalysed reaction is (6S)-5-methyl-5,6,7,8-tetrahydrofolate + L-homocysteine = (6S)-5,6,7,8-tetrahydrofolate + L-methionine. The protein operates within amino-acid biosynthesis; L-methionine biosynthesis via de novo pathway; L-methionine from L-homocysteine (MetH route): step 1/1. Catalyzes the transfer of a methyl group from methyl-cobalamin to homocysteine, yielding enzyme-bound cob(I)alamin and methionine. Subsequently, remethylates the cofactor using methyltetrahydrofolate. The chain is Methionine synthase (metH) from Salmonella typhimurium (strain LT2 / SGSC1412 / ATCC 700720).